We begin with the raw amino-acid sequence, 632 residues long: MNDTRPLLDRILSPRDLKKLSTKQLQQLADECRKELIELIAMNGGHFASSLGVTELTVALHHVYNTEEDRIVWDVGHQAYIHKMLTGRRSRMQTNRKYGGIAGFPKIHESPHDAFGTGHASTSISAAAGMAAGRDLKGGREKMVAVIGDGSMTGGMAFEAMNHLGDLKSDVLVILNDNQMAISPSTGGLKNHLVDITLNKTYNKARRLLWNSMSLLNHEGAKNALRRLEDGMKAALTPGAFFEALGLRYFGPIDGHDMGRLVRALKEMHELPNPKLLHVVTTKGKGFLPAEENQSGWHAHSGGFDTTTGMTAKKTGAPDPPKYQEIFGEALVEMALKDPAITAITAAMPSGTSLDLFEKAAPDRFYDVGIAEGHAVTFAAGLALEGLKPVCAIYSTFLQRALDQLIHDVALQNLHVVFAIDRAGLVGEDGPTHHGAFDLSFLHAVPGLTIMAPSDAQELRDMLHTALYHIEGPVAIRYPRGSSGGGPLRKDFTRLEPGRGRIIREGTGPVLFAIGSMVQAAVEAAALLEAEGIKPDIVDMRFLKPLDTALIDRLAASATHIVTIEENSILGGLGSAVSDHLASSPKKTPLLKIGLPDRFITHGSMQDLYRETGLDAAGIAEHVKEFYRTPVH.

Thiamine diphosphate-binding positions include His77 and Gly118–Ala120. Asp149 contributes to the Mg(2+) binding site. Residues Gly150 to Ser151, Asn178, Phe287, and Glu372 each bind thiamine diphosphate. Residue Asn178 participates in Mg(2+) binding.

The protein belongs to the transketolase family. DXPS subfamily. In terms of assembly, homodimer. It depends on Mg(2+) as a cofactor. Thiamine diphosphate serves as cofactor.

The catalysed reaction is D-glyceraldehyde 3-phosphate + pyruvate + H(+) = 1-deoxy-D-xylulose 5-phosphate + CO2. The protein operates within metabolic intermediate biosynthesis; 1-deoxy-D-xylulose 5-phosphate biosynthesis; 1-deoxy-D-xylulose 5-phosphate from D-glyceraldehyde 3-phosphate and pyruvate: step 1/1. Its function is as follows. Catalyzes the acyloin condensation reaction between C atoms 2 and 3 of pyruvate and glyceraldehyde 3-phosphate to yield 1-deoxy-D-xylulose-5-phosphate (DXP). This Chlorobium luteolum (strain DSM 273 / BCRC 81028 / 2530) (Pelodictyon luteolum) protein is 1-deoxy-D-xylulose-5-phosphate synthase.